Consider the following 155-residue polypeptide: Small ribosomal subunit protein uS7 (155 aa).

This sequence belongs to the universal ribosomal protein uS7 family. In terms of assembly, part of the 30S ribosomal subunit. Contacts proteins S9 and S11.

Its function is as follows. One of the primary rRNA binding proteins, it binds directly to 16S rRNA where it nucleates assembly of the head domain of the 30S subunit. Is located at the subunit interface close to the decoding center, probably blocks exit of the E-site tRNA. The sequence is that of Small ribosomal subunit protein uS7 from Lactococcus lactis subsp. lactis (strain IL1403) (Streptococcus lactis).